The primary structure comprises 194 residues: MREATVERATAETWVWLRLGLDGPTGGKVDTGLPFLDHMLLQLQRHGRFLLEVEARGDLEVDVHHLVEDVGIALGMALKEALGDGVGLERYAEAFAPMDETLVLCVLDLSGRPHLEFRPEAWPVVGEAGGVNHYHLREFLRGLVNHGRLTLHLRLLSGREAHHVVEASFKALARALHKATRRTGEGVPSTKGVL.

It belongs to the imidazoleglycerol-phosphate dehydratase family.

It is found in the cytoplasm. It carries out the reaction D-erythro-1-(imidazol-4-yl)glycerol 3-phosphate = 3-(imidazol-4-yl)-2-oxopropyl phosphate + H2O. It functions in the pathway amino-acid biosynthesis; L-histidine biosynthesis; L-histidine from 5-phospho-alpha-D-ribose 1-diphosphate: step 6/9. The protein is Imidazoleglycerol-phosphate dehydratase of Thermus thermophilus (strain ATCC 27634 / DSM 579 / HB8).